Reading from the N-terminus, the 470-residue chain is MSLSPVVVIGTGLAGLAAANELVNKYNIPVTILEKASSIGGNSIKASSGINGACTETQRHFHIEDSPRLFEDDTIKSAKGKGVQELMAKLANDSPLAIEWLKNEFDLKLDLLAQLGGHSVARTHRSSGKLPPGFEIVSALSNNLKKLAETKPELVKINLDSKVVDIHEKDGSISAVVYEDKNGEKHMVSANDVVFCSGGFGFSKEMLKEYAPELVNLPTTNGQQTTGDGQRLLQKLGADLIDMDQIQVHPTGFIDPNDRSSSWKFLAAESLRGLGGILLNPITGRRFVNELTTRDVVTAAIQKVCPQEDNRALLVMGEKMYTDLKNNLDFYMFKKLVQKLTLSQVVSEYNLPITVAQLCEELQTYSSFTTKADPLGRTVILNEFGSDVTPETVVFIGEVTPVVHFTMGGARINVKAQVIGKNDERLLKGLYAAGEVSGGVHGANRLGGSSLLECVVFGRTAAESIANDRK.

FAD is bound at residue 6-20 (VVVIGTGLAGLAAAN). Ser66 carries the post-translational modification Phosphoserine. Catalysis depends on residues His249 and Arg272.

The protein belongs to the FAD-dependent oxidoreductase 2 family. FRD/SDH subfamily. The cofactor is FAD. The N-terminus is blocked.

The protein localises to the cytoplasm. It catalyses the reaction succinate + NAD(+) = fumarate + NADH + H(+). Irreversibly catalyzes the reduction of fumarate to succinate. Together with the second isozyme of soluble fumarate reductase (OSM1), essential for anaerobic growth. Involved in maintaining redox balance. Reduction of fumarate is the main source of succinate during fermentation, and under anaerobic conditions, the formation of succinate is strictly required for the reoxidation of FADH(2). The sequence is that of Fumarate reductase 1 (FRD1) from Saccharomyces cerevisiae (strain ATCC 204508 / S288c) (Baker's yeast).